A 159-amino-acid polypeptide reads, in one-letter code: Urease subunit beta 2 (159 aa).

The interval 1–24 (MAKEPTKAAHPQPEQTKTNHKAHR) is disordered.

Belongs to the urease beta subunit family. In terms of assembly, heterotrimer of UreA (gamma), UreB (beta) and UreC (alpha) subunits. Three heterotrimers associate to form the active enzyme.

It localises to the cytoplasm. It carries out the reaction urea + 2 H2O + H(+) = hydrogencarbonate + 2 NH4(+). The protein operates within nitrogen metabolism; urea degradation; CO(2) and NH(3) from urea (urease route): step 1/1. Its function is as follows. Disrupting the ure2 operon has no effect on urease activity, or pathogen survival in BALB/c mice when inoculated by gavage, but confers slightly enhanced resistance to low pH killing in vitro. The protein is Urease subunit beta 2 of Brucella suis biovar 1 (strain 1330).